Here is a 736-residue protein sequence, read N- to C-terminus: Nucleoporin nup60 (736 aa).

The segment at 1-46 (MSSGPIRTLHKGKAARNRTPYDRIAASKDGNHSNGPQTPSKSIFQR) is disordered. A compositionally biased stretch (basic and acidic residues) spans 19 to 31 (TPYDRIAASKDGN). Residues 32–43 (HSNGPQTPSKSI) are compositionally biased toward polar residues. Phosphoserine is present on residues Ser-157, Ser-159, Ser-161, and Ser-162. Disordered stretches follow at residues 178–210 (RAAA…NSAK), 295–321 (DTSF…KTPS), 338–519 (TPSI…PNET), 565–614 (AVTD…RSLF), and 647–701 (EQAE…FPKF). 2 stretches are compositionally biased toward polar residues: residues 196-210 (RTSS…NSAK) and 295-314 (DTSF…TTAN). The span at 375–397 (QIRPSSEKSEPEKKEPSAFETLE) shows a compositional bias: basic and acidic residues. Positions 456–473 (SATTDKPSPPVSSIFSFN) are enriched in polar residues. Composition is skewed to low complexity over residues 474–505 (APSA…TSFS) and 573–587 (EVSS…TMIS). Residues 588–597 (QPNTGFSFGS) are compositionally biased toward polar residues. A compositionally biased stretch (basic and acidic residues) spans 664–692 (EVEKPSAEGTNEHKQDATMTLEKTDKQGS).

Component of the nuclear pore complex (NPC). NPC constitutes the exclusive means of nucleocytoplasmic transport. NPCs allow the passive diffusion of ions and small molecules and the active, nuclear transport receptor-mediated bidirectional transport of macromolecules such as proteins, RNAs, ribonucleoparticles (RNPs), and ribosomal subunits across the nuclear envelope.

Its subcellular location is the nucleus. It is found in the nuclear pore complex. The protein resides in the nucleus membrane. Its function is as follows. Functions as a component of the nuclear pore complex (NPC). NPC components, collectively referred to as nucleoporins (NUPs), can play the role of both NPC structural components and of docking or interaction partners for transiently associated nuclear transport factors. Active directional transport is assured by both, a Phe-Gly (FG) repeat affinity gradient for these transport factors across the NPC and a transport cofactor concentration gradient across the nuclear envelope. In Schizosaccharomyces pombe (strain 972 / ATCC 24843) (Fission yeast), this protein is Nucleoporin nup60 (nup60).